The primary structure comprises 30 residues: Brevinin-2Ej (30 aa).

C24 and C30 form a disulfide bridge.

Expressed by the skin glands.

The protein localises to the secreted. Functionally, shows antibacterial activity against representative Gram-negative and Gram-positive bacterial species, and hemolytic activity. The polypeptide is Brevinin-2Ej (Pelophylax ridibundus (Marsh frog)).